Reading from the N-terminus, the 139-residue chain is UDP-glucose 4-epimerase (139 aa).

Residues 11–12 (YI), 31–36 (DNLCNS), 58–59 (DI), 80–84 (FAGLK), N99, and S124 contribute to the NAD(+) site. S124 contacts substrate. The Proton acceptor role is filled by Y136.

It belongs to the NAD(P)-dependent epimerase/dehydratase family. Homodimer. Requires NAD(+) as cofactor.

The catalysed reaction is UDP-alpha-D-glucose = UDP-alpha-D-galactose. It participates in carbohydrate metabolism; galactose metabolism. Involved in the metabolism of galactose. Catalyzes the conversion of UDP-galactose (UDP-Gal) to UDP-glucose (UDP-Glc) through a mechanism involving the transient reduction of NAD. The protein is UDP-glucose 4-epimerase (galE) of Klebsiella pneumoniae.